The following is a 338-amino-acid chain: Nicotinate-nucleotide--dimethylbenzimidazole phosphoribosyltransferase (338 aa).

The active-site Proton acceptor is the Glu-305.

The protein belongs to the CobT family.

The catalysed reaction is 5,6-dimethylbenzimidazole + nicotinate beta-D-ribonucleotide = alpha-ribazole 5'-phosphate + nicotinate + H(+). It functions in the pathway nucleoside biosynthesis; alpha-ribazole biosynthesis; alpha-ribazole from 5,6-dimethylbenzimidazole: step 1/2. In terms of biological role, catalyzes the synthesis of alpha-ribazole-5'-phosphate from nicotinate mononucleotide (NAMN) and 5,6-dimethylbenzimidazole (DMB). The chain is Nicotinate-nucleotide--dimethylbenzimidazole phosphoribosyltransferase from Rhizobium meliloti (strain 1021) (Ensifer meliloti).